The sequence spans 472 residues: Tubulin gamma chain (472 aa).

Position 142 to 148 (142 to 148) interacts with GTP; the sequence is AGGTGSG.

This sequence belongs to the tubulin family.

The protein resides in the cytoplasm. Its subcellular location is the cytoskeleton. It localises to the microtubule organizing center. Tubulin is the major constituent of microtubules. The gamma chain is found at microtubule organizing centers (MTOC) such as the spindle poles, suggesting that it is involved in the minus-end nucleation of microtubule assembly. This chain is Tubulin gamma chain (TUBG), found in Anemia phyllitidis (Fern).